The sequence spans 594 residues: MLRDTYIGLVDDSFIGKHVKLAGWIDSIRDHGGVLFIDLRDKEGKLQAVLEESGNKELYDIAKHFKEESVVLVEGLVRRRPSGTENPKIKSGNVELLIERIELLNASETLPFPIDDNVDISEELRLKYRYLDLRRPKFQKAIKTRSKALKITRDFFEENGFYEIETPFLIKSTPEGARDFLVPSRLHPGKFYALPQSPQLFKQILMISGFDRYFQIARCFRDEDLRSDRQPEFTQIDFEMSFVEEQDIMEISEKLLSKLFLELLDIELSTPFKRITYKEAMERYGSDKPDTRFGLELVDLSDIFKNTNFNVFKSAIEQKGIIKAIKINKILSRKEIDNLTEYVKGLGAKGLAWGKIENGEFSSPIAKFLTEEEIKAMLSRLEAKDQDMIFFSADKPKNVYKILGNLRLQLGKMLNLIDESKFAFLWVVDFPMFEYNEEEGRLEAMHHPFTSPKTEDLDKIKYIVDKSDKEDIINIGENIGARAYDIVLNGVEIGGGSIRIHKQDIQKLVFKILNITDEEAAMKFGFLLEALKYGAPPHGGLAFGFDRLMAMMLGFDSIRDVIAFPKTQKGTCLLTGAPDVVSDKQLKELHIKIT.

Residue Glu-175 participates in L-aspartate binding. Residues 199-202 form an aspartate region; it reads QLFK. Position 221 (Arg-221) interacts with L-aspartate. ATP-binding positions include 221–223 and Gln-230; that span reads RDE. Position 446 (His-446) interacts with L-aspartate. ATP is bound at residue Glu-492. Position 499 (Arg-499) interacts with L-aspartate. 544–547 lines the ATP pocket; that stretch reads GFDR.

It belongs to the class-II aminoacyl-tRNA synthetase family. Type 1 subfamily. As to quaternary structure, homodimer.

It localises to the cytoplasm. The catalysed reaction is tRNA(Asx) + L-aspartate + ATP = L-aspartyl-tRNA(Asx) + AMP + diphosphate. In terms of biological role, aspartyl-tRNA synthetase with relaxed tRNA specificity since it is able to aspartylate not only its cognate tRNA(Asp) but also tRNA(Asn). Reaction proceeds in two steps: L-aspartate is first activated by ATP to form Asp-AMP and then transferred to the acceptor end of tRNA(Asp/Asn). This chain is Aspartate--tRNA(Asp/Asn) ligase, found in Hydrogenobaculum sp. (strain Y04AAS1).